The chain runs to 1203 residues: DNA-directed RNA polymerase subunit beta (1203 aa).

Over residues 1174–1195 the composition is skewed to basic and acidic residues; that stretch reads AAQEAKAAFEAEEAEKATKAEA. Residues 1174–1203 are disordered; the sequence is AAQEAKAAFEAEEAEKATKAEATEEAAEQE.

This sequence belongs to the RNA polymerase beta chain family. In terms of assembly, the RNAP catalytic core consists of 2 alpha, 1 beta, 1 beta' and 1 omega subunit. When a sigma factor is associated with the core the holoenzyme is formed, which can initiate transcription.

The enzyme catalyses RNA(n) + a ribonucleoside 5'-triphosphate = RNA(n+1) + diphosphate. Its function is as follows. DNA-dependent RNA polymerase catalyzes the transcription of DNA into RNA using the four ribonucleoside triphosphates as substrates. The chain is DNA-directed RNA polymerase subunit beta from Streptococcus pneumoniae (strain ATCC 700669 / Spain 23F-1).